The sequence spans 466 residues: GATA-binding factor 2 (466 aa).

Composition is skewed to low complexity over residues 139 to 155 (GSSTSSTASVSSLTPAS) and 174 to 188 (PDPNSTSAASPSSSA). Residues 139 to 196 (GSSTSSTASVSSLTPASHSGSHLFGFPPTPPKEVSPDPNSTSAASPSSSAGARQEDKD) are disordered. GATA-type zinc fingers lie at residues 281 to 305 (CVNCGATATPLWRRDGTGHYLCNAC) and 335 to 359 (CANCQTTTTTLWRRNANGDPVCNAC). Residues 436 to 466 (GHILPTPTPIHPSSSISFGHPHPSSMVTAMG) are disordered.

As to expression, expressed in all developmental stages of erythroid cells but is additionally found in a limited subset of other tissues.

Its subcellular location is the nucleus. Functionally, transcriptional activator which probably serves as a general switch factor for cell-specific development. It binds to DNA sites with the consensus sequence 5'-[AT]GATA[AG]-3' within regulatory regions of genes. In Gallus gallus (Chicken), this protein is GATA-binding factor 2 (GATA2).